A 305-amino-acid polypeptide reads, in one-letter code: LysM and putative peptidoglycan-binding domain-containing protein 3 (305 aa).

Topologically, residues 1-221 are extracellular; it reads MTGRNQHNGF…PYYGADWGMR (221 aa). Asparagine 29 carries N-linked (GlcNAc...) asparagine glycosylation. Residues 31 to 60 are disordered; that stretch reads SETEYSEEDGEAFELRSRGRERHHRSTSRD. One can recognise a LysM domain in the interval 68–112; that stretch reads LIREIKEGDTLISISLQYFCTVADIKRANNLLTEQDFFALRSLRI. Positions 121-144 are enriched in polar residues; it reads TETHNTAPHKSSSPSGTCRITETP. The segment at 121–156 is disordered; that stretch reads TETHNTAPHKSSSPSGTCRITETPVSGASLDSTSSS. Over residues 146-156 the composition is skewed to low complexity; the sequence is SGASLDSTSSS. Residues 222 to 242 traverse the membrane as a helical segment; it reads WWTAVAIMLVVGIVTPVFYLL. Over 243–305 the chain is Cytoplasmic; sequence YYEVLMKADV…QHHVKHQEET (63 aa).

The protein localises to the cell membrane. It is found in the golgi apparatus. Its function is as follows. Essential for Golgi structural integrity. This Danio rerio (Zebrafish) protein is LysM and putative peptidoglycan-binding domain-containing protein 3 (lysmd3).